The primary structure comprises 150 residues: UPF0506 protein SJCHGC03144 (150 aa).

The first 18 residues, 1–18, serve as a signal peptide directing secretion; sequence MNTCIQLLILCLVTVINS. N-linked (GlcNAc...) asparagine glycans are attached at residues N20, N36, N52, and N110. Cystine bridges form between C116-C130, C123-C134, and C129-C139.

Belongs to the UPF0506 family.

The protein resides in the secreted. The chain is UPF0506 protein SJCHGC03144 from Schistosoma japonicum (Blood fluke).